Here is a 203-residue protein sequence, read N- to C-terminus: Large ribosomal subunit protein bL25 (203 aa).

It belongs to the bacterial ribosomal protein bL25 family. CTC subfamily. In terms of assembly, part of the 50S ribosomal subunit; part of the 5S rRNA/L5/L18/L25 subcomplex. Contacts the 5S rRNA. Binds to the 5S rRNA independently of L5 and L18.

Its function is as follows. This is one of the proteins that binds to the 5S RNA in the ribosome where it forms part of the central protuberance. This Rickettsia peacockii (strain Rustic) protein is Large ribosomal subunit protein bL25.